A 511-amino-acid polypeptide reads, in one-letter code: Bifunctional purine biosynthesis protein PurH (511 aa).

The 145-residue stretch at 1–145 (MKKRALVSVS…KNHKFVSVIV (145 aa)) folds into the MGS-like domain.

The protein belongs to the PurH family.

It carries out the reaction (6R)-10-formyltetrahydrofolate + 5-amino-1-(5-phospho-beta-D-ribosyl)imidazole-4-carboxamide = 5-formamido-1-(5-phospho-D-ribosyl)imidazole-4-carboxamide + (6S)-5,6,7,8-tetrahydrofolate. The enzyme catalyses IMP + H2O = 5-formamido-1-(5-phospho-D-ribosyl)imidazole-4-carboxamide. It participates in purine metabolism; IMP biosynthesis via de novo pathway; 5-formamido-1-(5-phospho-D-ribosyl)imidazole-4-carboxamide from 5-amino-1-(5-phospho-D-ribosyl)imidazole-4-carboxamide (10-formyl THF route): step 1/1. The protein operates within purine metabolism; IMP biosynthesis via de novo pathway; IMP from 5-formamido-1-(5-phospho-D-ribosyl)imidazole-4-carboxamide: step 1/1. This is Bifunctional purine biosynthesis protein PurH from Bacillus anthracis (strain A0248).